A 521-amino-acid chain; its full sequence is GMP synthase [glutamine-hydrolyzing] (521 aa).

In terms of domain architecture, Glutamine amidotransferase type-1 spans 9-203; the sequence is KILILDFGSQ…VSDICQCKKN (195 aa). The active-site Nucleophile is cysteine 86. Catalysis depends on residues histidine 177 and glutamate 179. The 193-residue stretch at 204 to 396 folds into the GMPS ATP-PPase domain; sequence WTTDNIITKL…LGLPTHMLNC (193 aa). 231 to 237 contacts ATP; the sequence is SGGVDSS.

In terms of assembly, homodimer.

It carries out the reaction XMP + L-glutamine + ATP + H2O = GMP + L-glutamate + AMP + diphosphate + 2 H(+). Its pathway is purine metabolism; GMP biosynthesis; GMP from XMP (L-Gln route): step 1/1. In terms of biological role, catalyzes the synthesis of GMP from XMP. The protein is GMP synthase [glutamine-hydrolyzing] of Vesicomyosocius okutanii subsp. Calyptogena okutanii (strain HA).